Here is a 350-residue protein sequence, read N- to C-terminus: Holliday junction branch migration complex subunit RuvB (350 aa).

The segment at 1–186 (MAGHEEEDER…FGIPLRLDFY (186 aa)) is large ATPase domain (RuvB-L). ATP-binding positions include L25, R26, G67, K70, T71, T72, 133–135 (EDF), R176, Y186, and R223. T71 contacts Mg(2+). The small ATPAse domain (RuvB-S) stretch occupies residues 187–257 (ETDELVQIVT…IADAALNRLE (71 aa)). A head domain (RuvB-H) region spans residues 260–350 (GRGLDAMDRR…VQPDLWSDAP (91 aa)). The DNA site is built by R296, R315, and R320.

It belongs to the RuvB family. In terms of assembly, homohexamer. Forms an RuvA(8)-RuvB(12)-Holliday junction (HJ) complex. HJ DNA is sandwiched between 2 RuvA tetramers; dsDNA enters through RuvA and exits via RuvB. An RuvB hexamer assembles on each DNA strand where it exits the tetramer. Each RuvB hexamer is contacted by two RuvA subunits (via domain III) on 2 adjacent RuvB subunits; this complex drives branch migration. In the full resolvosome a probable DNA-RuvA(4)-RuvB(12)-RuvC(2) complex forms which resolves the HJ.

It is found in the cytoplasm. It catalyses the reaction ATP + H2O = ADP + phosphate + H(+). Its function is as follows. The RuvA-RuvB-RuvC complex processes Holliday junction (HJ) DNA during genetic recombination and DNA repair, while the RuvA-RuvB complex plays an important role in the rescue of blocked DNA replication forks via replication fork reversal (RFR). RuvA specifically binds to HJ cruciform DNA, conferring on it an open structure. The RuvB hexamer acts as an ATP-dependent pump, pulling dsDNA into and through the RuvAB complex. RuvB forms 2 homohexamers on either side of HJ DNA bound by 1 or 2 RuvA tetramers; 4 subunits per hexamer contact DNA at a time. Coordinated motions by a converter formed by DNA-disengaged RuvB subunits stimulates ATP hydrolysis and nucleotide exchange. Immobilization of the converter enables RuvB to convert the ATP-contained energy into a lever motion, pulling 2 nucleotides of DNA out of the RuvA tetramer per ATP hydrolyzed, thus driving DNA branch migration. The RuvB motors rotate together with the DNA substrate, which together with the progressing nucleotide cycle form the mechanistic basis for DNA recombination by continuous HJ branch migration. Branch migration allows RuvC to scan DNA until it finds its consensus sequence, where it cleaves and resolves cruciform DNA. The chain is Holliday junction branch migration complex subunit RuvB from Rhodospirillum rubrum (strain ATCC 11170 / ATH 1.1.1 / DSM 467 / LMG 4362 / NCIMB 8255 / S1).